Here is a 155-residue protein sequence, read N- to C-terminus: UPF0266 membrane protein LMHCC_1856 (155 aa).

Transmembrane regions (helical) follow at residues 8 to 28 (IFLF…DAVI), 46 to 66 (RWDG…NTFF), and 70 to 90 (PFST…ICFF).

This sequence belongs to the UPF0266 family.

It is found in the cell membrane. In Listeria monocytogenes serotype 4a (strain HCC23), this protein is UPF0266 membrane protein LMHCC_1856.